Reading from the N-terminus, the 372-residue chain is Dual-specificity RNA methyltransferase RlmN (372 aa).

Residue glutamate 93 is the Proton acceptor of the active site. The Radical SAM core domain maps to 99-338; sequence EKDRATLCIS…VTVRKTRGDD (240 aa). Cysteine 106 and cysteine 343 are disulfide-bonded. Residues cysteine 113, cysteine 117, and cysteine 120 each contribute to the [4Fe-4S] cluster site. S-adenosyl-L-methionine-binding positions include 167 to 168, serine 199, 221 to 223, and asparagine 300; these read GE and SLH. The S-methylcysteine intermediate role is filled by cysteine 343.

The protein belongs to the radical SAM superfamily. RlmN family. [4Fe-4S] cluster serves as cofactor.

Its subcellular location is the cytoplasm. The catalysed reaction is adenosine(2503) in 23S rRNA + 2 reduced [2Fe-2S]-[ferredoxin] + 2 S-adenosyl-L-methionine = 2-methyladenosine(2503) in 23S rRNA + 5'-deoxyadenosine + L-methionine + 2 oxidized [2Fe-2S]-[ferredoxin] + S-adenosyl-L-homocysteine. It catalyses the reaction adenosine(37) in tRNA + 2 reduced [2Fe-2S]-[ferredoxin] + 2 S-adenosyl-L-methionine = 2-methyladenosine(37) in tRNA + 5'-deoxyadenosine + L-methionine + 2 oxidized [2Fe-2S]-[ferredoxin] + S-adenosyl-L-homocysteine. Functionally, specifically methylates position 2 of adenine 2503 in 23S rRNA and position 2 of adenine 37 in tRNAs. m2A2503 modification seems to play a crucial role in the proofreading step occurring at the peptidyl transferase center and thus would serve to optimize ribosomal fidelity. This Psychromonas ingrahamii (strain DSM 17664 / CCUG 51855 / 37) protein is Dual-specificity RNA methyltransferase RlmN.